Reading from the N-terminus, the 156-residue chain is Small ribosomal subunit protein uS7 (156 aa).

It belongs to the universal ribosomal protein uS7 family. Part of the 30S ribosomal subunit. Contacts proteins S9 and S11.

One of the primary rRNA binding proteins, it binds directly to 16S rRNA where it nucleates assembly of the head domain of the 30S subunit. Is located at the subunit interface close to the decoding center, probably blocks exit of the E-site tRNA. The protein is Small ribosomal subunit protein uS7 of Staphylococcus aureus (strain bovine RF122 / ET3-1).